The chain runs to 450 residues: Phosphoglucosamine mutase (450 aa).

Ser101 (phosphoserine intermediate) is an active-site residue. Mg(2+) is bound by residues Ser101, Asp240, Asp242, and Asp244. A Phosphoserine modification is found at Ser101.

This sequence belongs to the phosphohexose mutase family. It depends on Mg(2+) as a cofactor. In terms of processing, activated by phosphorylation.

The enzyme catalyses alpha-D-glucosamine 1-phosphate = D-glucosamine 6-phosphate. Functionally, catalyzes the conversion of glucosamine-6-phosphate to glucosamine-1-phosphate. The polypeptide is Phosphoglucosamine mutase (Streptococcus thermophilus (strain CNRZ 1066)).